Here is a 138-residue protein sequence, read N- to C-terminus: Large ribosomal subunit protein bL19 (138 aa).

The protein belongs to the bacterial ribosomal protein bL19 family.

In terms of biological role, this protein is located at the 30S-50S ribosomal subunit interface and may play a role in the structure and function of the aminoacyl-tRNA binding site. The sequence is that of Large ribosomal subunit protein bL19 from Rickettsia africae (strain ESF-5).